Reading from the N-terminus, the 56-residue chain is Large ribosomal subunit protein bL32 (56 aa).

It belongs to the bacterial ribosomal protein bL32 family.

This Bacillus cereus (strain ATCC 14579 / DSM 31 / CCUG 7414 / JCM 2152 / NBRC 15305 / NCIMB 9373 / NCTC 2599 / NRRL B-3711) protein is Large ribosomal subunit protein bL32.